A 183-amino-acid polypeptide reads, in one-letter code: Protein Syd (183 aa).

This sequence belongs to the Syd family.

The protein resides in the cell inner membrane. Its function is as follows. Interacts with the SecY protein in vivo. May bind preferentially to an uncomplexed state of SecY, thus functioning either as a chelating agent for excess SecY in the cell or as a regulatory factor that negatively controls the translocase function. The sequence is that of Protein Syd from Yersinia pseudotuberculosis serotype O:1b (strain IP 31758).